Reading from the N-terminus, the 129-residue chain is MSMFRTLQRQPRTISLFTHDLENSRPCLSILEYLKSHTTNRFDLELSTKFPTLDQVHYMNAINPMILRAQIPHLTKIMKLKSYDPLFGSQLSDCVTKGFWNKEAPLWVDWEKKALGTDLQSIKELLEKD.

Residues 1-21 (MSMFRTLQRQPRTISLFTHDL) constitute a mitochondrion transit peptide. Cysteine 94 is an active-site residue.

This sequence belongs to the FMP46 family.

The protein resides in the mitochondrion. Putative mitochondrial redox protein which could be involved in the reduction of small toxic molecules. The protein is Putative redox protein FMP46, mitochondrial (FMP46) of Candida glabrata (strain ATCC 2001 / BCRC 20586 / JCM 3761 / NBRC 0622 / NRRL Y-65 / CBS 138) (Yeast).